We begin with the raw amino-acid sequence, 510 residues long: Zinc finger protein 692 (510 aa).

Disordered regions lie at residues 1-20 and 121-306; these read MAAS…RQLD and WGPS…EDTA. Ser-161 carries the post-translational modification Phosphoserine. Residues 163–172 show a composition bias toward basic and acidic residues; sequence CDERAQEARM. Residues 188-201 are compositionally biased toward acidic residues; it reads EDGEEEEEDEEEML. A Phosphoserine modification is found at Ser-225. Low complexity predominate over residues 237 to 265; that stretch reads APAPAAVPAPLASPSSSASSLGSGAPGPV. Polar residues predominate over residues 278-297; sequence QADQQTEPLASPGSQAQSAL. C2H2-type zinc fingers lie at residues 322 to 347, 353 to 377, 383 to 405, 411 to 433, and 442 to 465; these read LPCD…KYQH, FSCP…VKLH, YICE…RRIH, LQCE…RRKH, and FPCE…SKSH. At Ser-464 the chain carries Phosphoserine.

The protein belongs to the krueppel C2H2-type zinc-finger protein family. Phosphorylation at Ser-464 results in loss of DNA-binding activity.

The protein localises to the nucleus. Functionally, may act as an transcriptional repressor for PCK1 gene expression, in turn may participate in the hepatic gluconeogenesis regulation through the activated AMPK signaling pathway. This Bos taurus (Bovine) protein is Zinc finger protein 692.